Here is a 111-residue protein sequence, read N- to C-terminus: Probable 4-amino-4-deoxy-L-arabinose-phosphoundecaprenol flippase subunit ArnE (111 aa).

Residues 1–35 lie on the Cytoplasmic side of the membrane; the sequence is MIWLTLVFASLLSVAGQLCQKQATCFATVNKRRKH. Residues 36 to 56 traverse the membrane as a helical segment; sequence IVLWLGLALACLGLAMVLWLL. The 70-residue stretch at 40-109 folds into the EamA domain; sequence LGLALACLGL…IIGGIVILGS (70 aa). The Periplasmic portion of the chain corresponds to 57-60; the sequence is VLQN. Residues 61–81 form a helical membrane-spanning segment; the sequence is VPVGIAYPMLSLNFVWVTLAA. The Cytoplasmic portion of the chain corresponds to 82–87; sequence VKLWHE. Residues 88-108 traverse the membrane as a helical segment; the sequence is PVSLRHWCGVAFIIGGIVILG. Residues 109–111 are Periplasmic-facing; the sequence is STV.

Belongs to the ArnE family. As to quaternary structure, heterodimer of ArnE and ArnF.

It localises to the cell inner membrane. It functions in the pathway bacterial outer membrane biogenesis; lipopolysaccharide biosynthesis. Functionally, translocates 4-amino-4-deoxy-L-arabinose-phosphoundecaprenol (alpha-L-Ara4N-phosphoundecaprenol) from the cytoplasmic to the periplasmic side of the inner membrane. The polypeptide is Probable 4-amino-4-deoxy-L-arabinose-phosphoundecaprenol flippase subunit ArnE (Escherichia coli O6:H1 (strain CFT073 / ATCC 700928 / UPEC)).